A 366-amino-acid chain; its full sequence is MTIDQSQINFNVPSTYKLEEIVGEGAYGLVVAGTHLPSGTQVAIKRITPFDHTMFCQRTLREIKLLRHFHHENIISILDLIQPESYEVFNEVYLVQELMETDLHRVIRSQELSDDHCQYFVYQTLRGLKALHSADVLHRDLKPSNLLLNANCDLKICDFGLARSSAKPPPGTSDGGQGFMTEYVATRWYRAPEVMLSFQEYTKAIDLWSVGCILAEMINGKPLFPGRDYHHQLSLILQVLGTPTMDDFNEITSQRSKDYLRALEFTRRQDFSAICPKAKPAAVDLLKQTLTFSPSKRITVEEALMHSYVEAYHDPHDEPNAEPLKPGFFDFEFHQEKLSRDQWKRMIYDEVQDPVPTILSQWTESH.

In terms of domain architecture, Protein kinase spans 17–302; sequence KLEEIVGEGA…SPSKRITVEE (286 aa). ATP-binding positions include 22–30 and Lys45; that span reads VGEGAYGLV. Asp140 acts as the Proton acceptor in catalysis. Position 181 is a phosphothreonine (Thr181). The TXY signature appears at 181-183; that stretch reads TEY. Tyr183 carries the phosphotyrosine modification.

Belongs to the protein kinase superfamily. CMGC Ser/Thr protein kinase family. MAP kinase subfamily. The cofactor is Mg(2+). In terms of processing, dually phosphorylated on Thr-181 and Tyr-183, which activates the enzyme.

The enzyme catalyses L-seryl-[protein] + ATP = O-phospho-L-seryl-[protein] + ADP + H(+). The catalysed reaction is L-threonyl-[protein] + ATP = O-phospho-L-threonyl-[protein] + ADP + H(+). Its activity is regulated as follows. Activated by tyrosine and threonine phosphorylation. Functionally, responds to activation by environmental stress by phosphorylating downstream targets. The polypeptide is Mitogen-activated protein kinase CPK1 (CPK1) (Cryptococcus neoformans var. neoformans serotype D (strain B-3501A) (Filobasidiella neoformans)).